Reading from the N-terminus, the 182-residue chain is ATP-dependent protease subunit HslV (182 aa).

Residue T12 is part of the active site. 3 residues coordinate Na(+): A167, C170, and T173.

The protein belongs to the peptidase T1B family. HslV subfamily. A double ring-shaped homohexamer of HslV is capped on each side by a ring-shaped HslU homohexamer. The assembly of the HslU/HslV complex is dependent on binding of ATP.

It localises to the cytoplasm. It carries out the reaction ATP-dependent cleavage of peptide bonds with broad specificity.. Its activity is regulated as follows. Allosterically activated by HslU binding. Protease subunit of a proteasome-like degradation complex believed to be a general protein degrading machinery. The chain is ATP-dependent protease subunit HslV from Pelodictyon phaeoclathratiforme (strain DSM 5477 / BU-1).